We begin with the raw amino-acid sequence, 176 residues long: 3-hydroxyanthranilate 3,4-dioxygenase (176 aa).

R44 is a binding site for O2. 3 residues coordinate Fe cation: H48, E54, and H92. Substrate is bound at residue E54. R96 and E106 together coordinate substrate. 4 residues coordinate Fe cation: C121, C124, C158, and C161.

This sequence belongs to the 3-HAO family. As to quaternary structure, homodimer. It depends on Fe(2+) as a cofactor.

The catalysed reaction is 3-hydroxyanthranilate + O2 = (2Z,4Z)-2-amino-3-carboxymuconate 6-semialdehyde. Its pathway is cofactor biosynthesis; NAD(+) biosynthesis; quinolinate from L-kynurenine: step 3/3. In terms of biological role, catalyzes the oxidative ring opening of 3-hydroxyanthranilate to 2-amino-3-carboxymuconate semialdehyde, which spontaneously cyclizes to quinolinate. This is 3-hydroxyanthranilate 3,4-dioxygenase from Xanthomonas campestris pv. campestris (strain B100).